The following is a 563-amino-acid chain: Sperm-tail PG-rich repeat-containing protein 2 (563 aa).

3 STPGR repeats span residues 21-34 (VGPGTYQVPFPKQQ), 63-73 (PGPAHYNVSQA), and 97-107 (GPGPASYDCPY). Positions 131–163 (IPSIPSSGKSHGYHLNEDDTIMRRTPPSSDKTM) are disordered. STPGR repeat units follow at residues 200-219 (GPGPGHYDIIQKRKLRYENI), 250-263 (PGPGKYNIKSQFDH), 292-321 (TPAPGTYNETRTAFKVPKKRSGLFSPFGQR), 334-353 (LPGPGFYDISTNIVKAQVKK), 423-438 (LPAPGCYDVQKSYDMS), 473-483 (GPGPATYNPIL), and 507-518 (SPGPTTYELSPF).

The sequence is that of Sperm-tail PG-rich repeat-containing protein 2 (Stpg2) from Rattus norvegicus (Rat).